Reading from the N-terminus, the 141-residue chain is MYFAIRLSFVLAVLFCLTGNGNARMLGADFNRLQQLQRRSHQSNDANTQLKIAYEVIGIYDKYKGQKGSDLLREAQLNSEVNDFKRKNVVVDGVPAQGGGIKDAVKKIADEVPDDVKKNAKDIAVKIAKSVTKSIFKYFLN.

Residues 1–23 (MYFAIRLSFVLAVLFCLTGNGNA) form the signal peptide.

This sequence belongs to the Turandot family.

Its subcellular location is the secreted. Its function is as follows. A humoral factor that may play a role in stress tolerance. The polypeptide is Protein Turandot Z (Drosophila yakuba (Fruit fly)).